The primary structure comprises 435 residues: UPF0761 membrane protein mma_2179 (435 aa).

Helical transmembrane passes span valine 45–phenylalanine 65, leucine 103–aspartate 123, isoleucine 142–phenylalanine 162, valine 177–phenylalanine 197, leucine 208–valine 228, and phenylalanine 252–valine 272.

The protein belongs to the UPF0761 family.

It is found in the cell inner membrane. This is UPF0761 membrane protein mma_2179 from Janthinobacterium sp. (strain Marseille) (Minibacterium massiliensis).